A 338-amino-acid chain; its full sequence is Phytanoyl-CoA dioxygenase, peroxisomal (338 aa).

The N-terminal 30 residues, 1–30 (MEQLRAAARLQIVLGHLGRPSAGAVVAHPT), are a transit peptide targeting the peroxisome. An N6-succinyllysine mark is found at K59 and K108. Residues K120, M157, 175–177 (HQD), and W193 contribute to the 2-oxoglutarate site. Positions 175 and 177 each coordinate Fe cation. An N6-succinyllysine mark is found at K231 and K252. H264 contributes to the Fe cation binding site. 2-oxoglutarate is bound by residues S266 and R275. A Phosphoserine modification is found at S317.

It belongs to the PhyH family. As to quaternary structure, interacts with FKBP52. Interacts with PHYHIP. The cofactor is Fe cation. L-ascorbate is required as a cofactor. It depends on ATP as a cofactor. Requires Mg(2+) as cofactor. Expressed in liver, kidney, and T-cells, but not in spleen, brain, heart, lung and skeletal muscle.

It localises to the peroxisome. The enzyme catalyses phytanoyl-CoA + 2-oxoglutarate + O2 = 2-hydroxyphytanoyl-CoA + succinate + CO2. It carries out the reaction 3-methylhexadecanoyl-CoA + 2-oxoglutarate + O2 = 2-hydroxy-3-methylhexadecanoyl-CoA + succinate + CO2. The catalysed reaction is hexadecanoyl-CoA + 2-oxoglutarate + O2 = 2-hydroxyhexadecanoyl-CoA + succinate + CO2. It catalyses the reaction octanoyl-CoA + 2-oxoglutarate + O2 = 2-hydroxyoctanoyl-CoA + succinate + CO2. The enzyme catalyses decanoyl-CoA + 2-oxoglutarate + O2 = 2-hydroxydecanoyl-CoA + succinate + CO2. It carries out the reaction 3-methylbutanoyl-CoA + 2-oxoglutarate + O2 = 2-hydroxy-3-methylbutanoyl-CoA + succinate + CO2. The catalysed reaction is heptadecanoyl-CoA + 2-oxoglutarate + O2 = 2-hydroxyheptadecanoyl-CoA + succinate + CO2. It catalyses the reaction eicosanoyl-CoA + 2-oxoglutarate + O2 = 2-hydroxyeicosanoyl-CoA + succinate + CO2. The enzyme catalyses octadecanoyl-CoA + 2-oxoglutarate + O2 = 2-hydroxyoctadecanoyl-CoA + succinate + CO2. It carries out the reaction dodecanoyl-CoA + 2-oxoglutarate + O2 = 2-hydroxydodecanoyl-CoA + succinate + CO2. The catalysed reaction is tetradecanoyl-CoA + 2-oxoglutarate + O2 = 2-hydroxytetradecanoyl-CoA + succinate + CO2. It catalyses the reaction hexanoyl-CoA + 2-oxoglutarate + O2 = 2-hydroxyhexanoyl-CoA + succinate + CO2. The enzyme catalyses butanoyl-CoA + 2-oxoglutarate + O2 = 2-hydroxybutanoyl-CoA + succinate + CO2. It carries out the reaction 3-methylnonanoyl-CoA + 2-oxoglutarate + O2 = 2-hydroxy-3-methylnonanoyl-CoA + succinate + CO2. The catalysed reaction is 3-methylundecanoyl-CoA + 2-oxoglutarate + O2 = 2-hydroxy-3-methylundecanoyl-CoA + succinate + CO2. It catalyses the reaction 3-methyldodecanoyl-CoA + 2-oxoglutarate + O2 = 2-hydroxy-3-methyldodecanoyl-CoA + succinate + CO2. It functions in the pathway lipid metabolism; fatty acid metabolism. Functionally, catalyzes the 2-hydroxylation of not only racemic phytanoyl-CoA and the isomers of 3-methylhexadecanoyl-CoA, but also a variety of other mono-branched 3-methylacyl-CoA esters (with a chain length of at least seven carbon atoms) and straight-chain acyl-CoA esters (with a chain length longer than four carbon atoms). Does not hydroxylate long and very long straight chain acyl-CoAs or 2-methyl- and 4-methyl-branched acyl-CoAs. The protein is Phytanoyl-CoA dioxygenase, peroxisomal (PHYH) of Homo sapiens (Human).